A 70-amino-acid chain; its full sequence is DNA-directed RNA polymerase subunit omega (70 aa).

This sequence belongs to the RNA polymerase subunit omega family. In cyanobacteria the RNAP catalytic core is composed of 2 alpha, 1 beta, 1 beta', 1 gamma and 1 omega subunit. When a sigma factor is associated with the core the holoenzyme is formed, which can initiate transcription.

The enzyme catalyses RNA(n) + a ribonucleoside 5'-triphosphate = RNA(n+1) + diphosphate. Promotes RNA polymerase assembly. Latches the N- and C-terminal regions of the beta' subunit thereby facilitating its interaction with the beta and alpha subunits. In Prochlorococcus marinus (strain NATL1A), this protein is DNA-directed RNA polymerase subunit omega.